We begin with the raw amino-acid sequence, 334 residues long: N-acetyl-gamma-glutamyl-phosphate reductase (334 aa).

Cys154 is an active-site residue.

It belongs to the NAGSA dehydrogenase family. Type 1 subfamily.

It localises to the cytoplasm. The catalysed reaction is N-acetyl-L-glutamate 5-semialdehyde + phosphate + NADP(+) = N-acetyl-L-glutamyl 5-phosphate + NADPH + H(+). It participates in amino-acid biosynthesis; L-arginine biosynthesis; N(2)-acetyl-L-ornithine from L-glutamate: step 3/4. Its function is as follows. Catalyzes the NADPH-dependent reduction of N-acetyl-5-glutamyl phosphate to yield N-acetyl-L-glutamate 5-semialdehyde. In Escherichia coli (strain K12), this protein is N-acetyl-gamma-glutamyl-phosphate reductase.